The chain runs to 252 residues: dITP/XTP pyrophosphatase (252 aa).

7–12 lines the substrate pocket; sequence THNEGK. Catalysis depends on Asp74, which acts as the Proton acceptor. A Mg(2+)-binding site is contributed by Asp74. Residues Ser75 and 193-196 contribute to the substrate site; that span reads FGYD. The interval 202–229 is disordered; it reads DDQPAGRVSTEPDHEGEPLTSAEMTPAE. Residues Lys230 and 235–236 contribute to the substrate site; that span reads HR.

The protein belongs to the HAM1 NTPase family. As to quaternary structure, homodimer. Requires Mg(2+) as cofactor.

It catalyses the reaction XTP + H2O = XMP + diphosphate + H(+). The enzyme catalyses dITP + H2O = dIMP + diphosphate + H(+). It carries out the reaction ITP + H2O = IMP + diphosphate + H(+). Its function is as follows. Pyrophosphatase that catalyzes the hydrolysis of nucleoside triphosphates to their monophosphate derivatives, with a high preference for the non-canonical purine nucleotides XTP (xanthosine triphosphate), dITP (deoxyinosine triphosphate) and ITP. Seems to function as a house-cleaning enzyme that removes non-canonical purine nucleotides from the nucleotide pool, thus preventing their incorporation into DNA/RNA and avoiding chromosomal lesions. The polypeptide is dITP/XTP pyrophosphatase (Bifidobacterium longum (strain NCC 2705)).